The following is an 831-amino-acid chain: MSVVGFDFGNENCLVAVARQRGIDVVLNDESNRETPAIVCFGDKQRFIGTAGAASTMMNPKNSISQIKRLIGRQFSDPELQRDIKSLPFSVTEGPDGYPLIHANYLGEKRAFTPTQVMGMMLSNLKGIAEKNLNTAVVDCCIGIPVYFTDLQRRAVLDAATIAGLHPLRLIHETTATALAYGIYKTDLPESDQLNVAFIDIGHASMQVCIAGFKKGQLKILSHAFDRSLGGRDFDEVLFNHFAAKFKDEYKIDVSQNAKASLRLRATCEKLKKVLSANPLAPLNIECLMDEKDVRGVIKREEFEEISIPILERVKRPLEKALSDAGLTVEDVHMVEVIGSGSRVPAMIKILTEFFGKEPRRTMNASECVSRGCALQCAILSPTFKVREFQVHESFPFSISLAWKGAASEAQNGGAENQQSTIVFPKGNPIPSVKALTFYRSGTFSVDVQYSDVNDLQAPPKISTYTIGPFQSSKGERAKLKVKVRLNLHGIVSVESATLLEEEEVEVPVTKEHSEETTKMDSDKASAEAAPASGDCDVNMQDAKDTSDATGTDNGVPESAEKPVQMETDSKAEAPKKKVKKTNVPLSELVYGALKTVEVEKAVEKEFEMALQDRVMEETKDRKNAVESYVYDMRNKLSDKYQEYITDSEREAFLANLQEVEDWLYEDGEDETKGVYVAKLEELKKVGDPVEVRYKESLERGSVIDQLGYCINSYREAAMSTDPKFDHIELAEKQKVLNECVEAEAWLRGKQQQQDTLPKYATPALLSADVKSKAEALDKFCRPIMTKPKPVAKAEAPQAKGGEQADEGKSEPEQPASAEPMETENPAEGST.

Disordered regions lie at residues Glu503–Val579 and Thr786–Thr831. Positions Val509–Ser526 are enriched in basic and acidic residues. Position 533 is a phosphoserine (Ser533).

It belongs to the heat shock protein 70 (TC 1.A.33) family. HSP110/SSE subfamily. As to quaternary structure, interacts with HTT1 in both cytoplasm and nucleus. As to expression, constitutively expressed.

It is found in the cytoplasm. Its subcellular location is the nucleus. In cooperation with other chaperones, Hsp70s are key components that facilitate folding of de novo synthesized proteins, assist translocation of precursor proteins into organelles, and are responsible for degradation of damaged protein under stress conditions. The protein is Heat shock 70 kDa protein 14 (HSP70-14) of Arabidopsis thaliana (Mouse-ear cress).